A 292-amino-acid chain; its full sequence is Homeobox-leucine zipper protein HOX19 (292 aa).

Disordered regions lie at residues 14 to 85, 99 to 133, and 217 to 236; these read LALG…HSVS, RERA…RLTK, and FAPP…PPAP. Positions 28-74 are enriched in low complexity; sequence TDAAAAHRGGCRRPSPSSQCPPLEPSLTLSLPDDAAAGAAATATATA. The segment covering 99–109 has biased composition (basic and acidic residues); it reads RERAEEADGER. The homeobox DNA-binding region spans 124-183; the sequence is STRKKLRLTKEQSALLEDRFREHSTLNPKQKVALAKQLNLRPRQVEVWFQNRRARTKLKQ. The interval 182–226 is leucine-zipper; that stretch reads KQTEVDCEFLKRCCETLTEENRRLQRELQELRALKFAPPPPSSAA.

The protein belongs to the HD-ZIP homeobox family. Class II subfamily. As to expression, expressed in seedlings, roots, stems, leaf sheaths and blades and panicles.

The protein localises to the nucleus. Functionally, probable transcription factor. The polypeptide is Homeobox-leucine zipper protein HOX19 (HOX19) (Oryza sativa subsp. japonica (Rice)).